Consider the following 124-residue polypeptide: Small ribosomal subunit protein uS13 (124 aa).

The segment at 95–124 (GLPVRGQRTKTNARTRKGPKRTIAGKKKAR) is disordered.

Belongs to the universal ribosomal protein uS13 family. As to quaternary structure, part of the 30S ribosomal subunit. Forms a loose heterodimer with protein S19. Forms two bridges to the 50S subunit in the 70S ribosome.

In terms of biological role, located at the top of the head of the 30S subunit, it contacts several helices of the 16S rRNA. In the 70S ribosome it contacts the 23S rRNA (bridge B1a) and protein L5 of the 50S subunit (bridge B1b), connecting the 2 subunits; these bridges are implicated in subunit movement. Contacts the tRNAs in the A and P-sites. In Mycobacterium marinum (strain ATCC BAA-535 / M), this protein is Small ribosomal subunit protein uS13.